The chain runs to 312 residues: Olfactory receptor 51B2 (312 aa).

The Extracellular portion of the chain corresponds to 1 to 23 (MWPNITAAPFLLTGFPGLEAAHH). Residue N4 is glycosylated (N-linked (GlcNAc...) asparagine). The helical transmembrane segment at 24–44 (WISIPFFAVYVCILLGNGMLL) threads the bilayer. Residues 45–52 (YLIKHDHS) lie on the Cytoplasmic side of the membrane. The chain crosses the membrane as a helical span at residues 53–73 (LHEPMYYFLTMLAGTDLMVTL). Topologically, residues 74–97 (TTMPTVMGILWVNHREISSVGCFL) are extracellular. C95 and C187 are disulfide-bonded. The helical transmembrane segment at 98 to 118 (QAYFIHSLSVVESGSLLAMAY) threads the bilayer. Residues 119–137 (DCFIAIRNPLRYASILTNT) lie on the Cytoplasmic side of the membrane. The chain crosses the membrane as a helical span at residues 138 to 158 (RVIALGVGVFLRGFVSILPVI). At 159 to 194 (LRLFSFSYCKSHVITRAFCLHQEIMRLACADITFNR) the chain is on the extracellular side. Residues 195–215 (LYPVILISLTIFLDCLIILFS) form a helical membrane-spanning segment. Residues 216–235 (YILILNTVIGIASGEERAKA) lie on the Cytoplasmic side of the membrane. Residues 236-256 (LNTCISHISCVLIFYVTVMGL) traverse the membrane as a helical segment. The Extracellular portion of the chain corresponds to 257-271 (TFIYRFGKNVPEVVH). A helical membrane pass occupies residues 272–292 (IIMSYIYFLFPPLMNPVIYSI). Residues 293-312 (KTKQIQYGIIRLLSKHRFSS) lie on the Cytoplasmic side of the membrane.

The protein belongs to the G-protein coupled receptor 1 family. Post-translationally, ubiquitinated by the CRL2(FEM1A) and CRL2(FEM1C) complexes, which recognize the -Lys-Xaa-Xaa-Arg C-degron at the C-terminus, leading to its degradation.

The protein localises to the cell membrane. Functionally, odorant receptor. The sequence is that of Olfactory receptor 51B2 (OR51B2) from Homo sapiens (Human).